We begin with the raw amino-acid sequence, 241 residues long: Tetraspanin-1 (241 aa).

Residues 1–11 (MQCFSFIKTMM) are Cytoplasmic-facing. The chain crosses the membrane as a helical span at residues 12-32 (ILFNLLIFLCGAALLAVGIWV). Topologically, residues 33–52 (SIDGASFLKIFGPLSSSAMQ) are extracellular. The helical transmembrane segment at 53 to 73 (FVNVGYFLIAAGVVVFALGFL) threads the bilayer. Topologically, residues 74–88 (GCYGAKTESKCALVT) are cytoplasmic. The helical transmembrane segment at 89–109 (FFFILLLIFIAEVAAAVVALV) threads the bilayer. The Extracellular segment spans residues 110–211 (YTTMAEHFLT…NQLLYDIRTN (102 aa)). N-linked (GlcNAc...) asparagine glycans are attached at residues Asn-141, Asn-154, Asn-178, and Asn-184. The chain crosses the membrane as a helical span at residues 212–232 (AVTVGGVAAGIGGLELAAMIV). At 233 to 241 (SMYLYCNLQ) the chain is on the cytoplasmic side.

Belongs to the tetraspanin (TM4SF) family. In terms of assembly, interacts with SLC19A2. Interacts with NTRK1/TRKA.

The protein localises to the cell membrane. It is found in the lysosome membrane. Structural component of specialized membrane microdomains known as tetraspanin-enriched microdomains (TERMs), which act as platforms for receptor clustering and signaling. Participates thereby in diverse biological functions such as cell signal transduction, adhesion, migration and protein trafficking. Regulates neuronal differentiation in response to NGF by facilitating NGF-mediated activation of NTRK1/TRKA receptor tyrosine kinase and subsequent downstream signaling pathways. Plays a role in the inhibition of TNFalpha-induced apoptosis. Mechanistically, inhibits the NF-kappa-B signaling pathway by blocking phosphorylation of CHUK. Also promotes the stability of the thiamine transporter 1/SLC19A2 in intestinal epithelial cells leading to an increase of thiamine uptake process. The chain is Tetraspanin-1 (TSPAN1) from Homo sapiens (Human).